The primary structure comprises 415 residues: Lipid II:glycine glycyltransferase (415 aa).

It belongs to the FemABX family.

The protein resides in the cytoplasm. The catalysed reaction is beta-D-GlcNAc-(1-&gt;4)-Mur2Ac(oyl-L-Ala-D-isoglutaminyl-L-Lys-D-Ala-D-Ala)-di-trans,octa-cis-undecaprenyl diphosphate + glycyl-tRNA(Gly) = beta-D-GlcNAc-(1-&gt;4)-Mur2Ac(oyl-L-Ala-D-isoglutaminyl-L-Lys-(N(6)-Gly)-D-Ala-D-Ala)-di-trans,octa-cis-undecaprenyl diphosphate + tRNA(Gly) + H(+). In terms of biological role, catalyzes the incorporation of amino acid(s) into the interchain peptide bridge of peptidoglycan, using aminoacyl-tRNA as amino acid donor. In Staphylococcus saprophyticus subsp. saprophyticus (strain ATCC 15305 / DSM 20229 / NCIMB 8711 / NCTC 7292 / S-41), this protein is Lipid II:glycine glycyltransferase (femX).